The sequence spans 1120 residues: MYGSARSVGKVEPSSQSPGRSPRLPRSPRLGHRRTNSTGGSSGNSVGGGSGKTLSMENIQSLNAAYATSGPMYLSDHENVGAETPKSTMTLGRSGGRLPYGVRMTAMGSSPNIASSGVASDTIAFGEHHLPPVSMASTVPHSLRQARDNTIMDLQTQLKEVLRENDLLRKDVEVKESKLSSSMNSIKTFWSPELKKERALRKDEASKITIWKEQYRVVQEENQHMQMTIQALQDELRIQRDLNQLFQQDSSSRTGEPCVAELTEENFQRLHAEHERQAKELFLLRKTLEEMELRIETQKQTLNARDESIKKLLEMLQSKGLSAKATEEDHERTRRLAEAEMHVHHLESLLEQKEKENNMLREEMHRRFENAPDSAKTKALQTVIEMKDSKISSMERGLRDLEEEIQMLKSNGALSSEEREEEMKQMEVYRSHSKFMKNKVEQLKEELSSKDAQGEELKKRAAGLQSEIGQVKQELSRKDTELLALQTKLETLTNQFSDSKQHIEVLKESLTAKEQRAAILQTEVDALRLRLEEKETMLNKKTKQIQDMAEEKGTQAGEIHDLKDMLDVKERKVNVLQKKIENLQEQLRDKEKQMSSLKERVKSLQADTTNTDTALTTLEEALADKERTIERLKEQRDRDEREKQEEIDTYKKDLKDLREKVSLLQGDLSEKEASLLDIKEHASSLASSGLKKDSRLKTLEIALEQKKEECLKMESQLKKAHEATLEARASPEMSDRIQQLEREISRYKDESSKAQTEVDRLLEILKEVENEKNDKDKKIAELESLTSRQVKDQNKKVANLKHKEQVEKKKSAQMLEEARRREDSLSDSSQQLQDSLRKKDDRIEELEEALRESVQITAEREMVLAQEESARTNAEKQVEELLMAMEKVKQELESMKAKLSSTQQSLAEKETHLTNLRAERRKHLEEVLEMKQEALLAAISEKDANIALLELSSSKKKTQEEVAALKREKDRLVQQLKQQTQNRMKLMADNYEDDHFRSSRSNQTNHKPSPDQIIQPLLELDQNRSKLKLYIGHLTALCHDRDPLILRGLTPPASYNADGEQAAWENELQQMTQEQLQNELEKVEGDNAELQEFANTILQQIADHCPDILEQVVNALEESS.

The disordered stretch occupies residues 1–54; that stretch reads MYGSARSVGKVEPSSQSPGRSPRLPRSPRLGHRRTNSTGGSSGNSVGGGSGKTL. The residue at position 10 (Lys-10) is an N6-acetyllysine. Positions 13 to 28 are enriched in low complexity; sequence PSSQSPGRSPRLPRSP. Phosphoserine occurs at positions 17, 21, and 37. At Thr-38 the chain carries Phosphothreonine. Residues 40–51 are compositionally biased toward gly residues; that stretch reads GSSGNSVGGGSG. A phosphoserine mark is found at Ser-55, Ser-75, Ser-94, Ser-824, Leu-965, and Ser-1009. Residues 144-992 adopt a coiled-coil conformation; that stretch reads RQARDNTIMD…RMKLMADNYE (849 aa). Positions 801–824 are enriched in basic and acidic residues; the sequence is KHKEQVEKKKSAQMLEEARRREDS. The disordered stretch occupies residues 801–840; that stretch reads KHKEQVEKKKSAQMLEEARRREDSLSDSSQQLQDSLRKKD. At Thr-1050 the chain carries Phosphothreonine. In terms of domain architecture, FIP-RBD spans 1050–1112; that stretch reads TPPASYNADG…DHCPDILEQV (63 aa). Positions 1060–1104 form a coiled coil; the sequence is EQAAWENELQQMTQEQLQNELEKVEGDNAELQEFANTILQQIADH.

Interacts with the GTB-bound forms of RAB6A isoform 1 and isoform 2 and with RAB6B. The interaction was strongest with RAB6B, followed by RAB6A isoform 2 and weakest with RAB6A isoform 1. Part of a complex with CHUK, IKBKB and IKBKG. Interacts with CHUK, IKBKB and IKBKG. The interaction with IKBKG is independent of CHUK and IKBKB. Interacts with NFKBIA. Isoform 2 interacts through its C-terminus with the PDZ domains of RIMS1 and RIMS2. Interacts with ERC2/CAST1. Interacts with SDCCAG8. Part of a cortical microtubule stabilization complex (CMSC) composed of KANK1, PPFIA1, PPFIBP1, ERC1/ELKS, PHLDB2/LL5beta, CLASPs, KIF21A and possibly additional interactors; within CMSCs KANK1 and PHLDB2/LL5beta appear to be the core components for targeting of microtubule-binding proteins KIF21A and CLASPs, whereas PPFIA1, PPFIBP1 and ERC1/ELKS serve as scaffolds for protein clustering. In terms of tissue distribution, widely expressed.

The protein resides in the cytoplasm. Its subcellular location is the cytoskeleton. It is found in the microtubule organizing center. It localises to the centrosome. The protein localises to the membrane. The protein resides in the golgi apparatus membrane. Its subcellular location is the presynaptic active zone. It is found in the cell projection. It localises to the podosome. In terms of biological role, regulatory subunit of the IKK complex. Probably recruits IkappaBalpha/NFKBIA to the complex. May be involved in the organization of the cytomatrix at the nerve terminals active zone (CAZ) which regulates neurotransmitter release. May be involved in vesicle trafficking at the CAZ. May be involved in Rab-6 regulated endosomes to Golgi transport. In Mus musculus (Mouse), this protein is ELKS/Rab6-interacting/CAST family member 1.